A 110-amino-acid polypeptide reads, in one-letter code: UPF0145 protein (110 aa).

Belongs to the UPF0145 family.

This chain is UPF0145 protein, found in Listeria ivanovii.